Here is a 155-residue protein sequence, read N- to C-terminus: Protein-export protein SecB (155 aa).

This sequence belongs to the SecB family. As to quaternary structure, homotetramer, a dimer of dimers. One homotetramer interacts with 1 SecA dimer.

Its subcellular location is the cytoplasm. In terms of biological role, one of the proteins required for the normal export of preproteins out of the cell cytoplasm. It is a molecular chaperone that binds to a subset of precursor proteins, maintaining them in a translocation-competent state. It also specifically binds to its receptor SecA. In Citrobacter koseri (strain ATCC BAA-895 / CDC 4225-83 / SGSC4696), this protein is Protein-export protein SecB.